A 205-amino-acid chain; its full sequence is Proteasome subunit beta type-3 (205 aa).

Position 2 is an N-acetylserine (Ser2). The residue at position 77 (Lys77) is an N6-acetyllysine.

It belongs to the peptidase T1B family. As to quaternary structure, the 26S proteasome consists of a 20S proteasome core and two 19S regulatory subunits. The 20S proteasome core is a barrel-shaped complex made of 28 subunits that are arranged in four stacked rings. The two outer rings are each formed by seven alpha subunits, and the two inner rings are formed by seven beta subunits. The proteolytic activity is exerted by three beta-subunits PSMB5, PSMB6 and PSMB7.

The protein localises to the cytoplasm. It localises to the nucleus. Non-catalytic component of the 20S core proteasome complex involved in the proteolytic degradation of most intracellular proteins. This complex plays numerous essential roles within the cell by associating with different regulatory particles. Associated with two 19S regulatory particles, forms the 26S proteasome and thus participates in the ATP-dependent degradation of ubiquitinated proteins. The 26S proteasome plays a key role in the maintenance of protein homeostasis by removing misfolded or damaged proteins that could impair cellular functions, and by removing proteins whose functions are no longer required. Associated with the PA200 or PA28, the 20S proteasome mediates ubiquitin-independent protein degradation. This type of proteolysis is required in several pathways including spermatogenesis (20S-PA200 complex) or generation of a subset of MHC class I-presented antigenic peptides (20S-PA28 complex). In Rattus norvegicus (Rat), this protein is Proteasome subunit beta type-3 (Psmb3).